A 439-amino-acid polypeptide reads, in one-letter code: Secreted RxLR effector protein 117 (439 aa).

The first 21 residues, 1–21 (MRGAYYVLAALLVVASSQIAA), serve as a signal peptide directing secretion. The short motif at 48–65 (RYLRGGHDVHDDSANEER) is the RxLR-dEER element.

This sequence belongs to the RxLR effector family.

It is found in the secreted. Its subcellular location is the host nucleus. Its function is as follows. Secreted effector that acts as an elicitor that induces cell death in host plant cells. The protein is Secreted RxLR effector protein 117 of Plasmopara viticola (Downy mildew of grapevine).